A 981-amino-acid chain; its full sequence is Polyhomeotic-like protein 3 (981 aa).

A compositionally biased stretch (low complexity) spans 1 to 28 (MDSEPSSGTSVSTTASSTTTTTITTSSS). Disordered stretches follow at residues 1–33 (MDSEPSSGTSVSTTASSTTTTTITTSSSRMQQP), 102–127 (LSSGRPSTSPTGSVTQQSSMSQTSIL), 224–280 (LSSS…TAVT), and 307–407 (QIPL…SQSP). A compositionally biased stretch (polar residues) spans 224-255 (LSSSQNGSPKSAGQTQSLTICHNKTTVTSSKI). A phosphoserine mark is found at Ser231, Ser261, Ser269, and Ser312. The span at 256–266 (SQRDPSPESKK) shows a compositional bias: basic and acidic residues. Over residues 321–340 (QLLLQQQQQQIQPITLQSPS) the composition is skewed to low complexity. Polar residues predominate over residues 360-373 (APSNAQPQHCSPVQ). Low complexity predominate over residues 381–395 (VSPNQAQSAQQSVVV). Phosphothreonine occurs at positions 607 and 612. Ser614 carries the post-translational modification Phosphoserine. Residues 650 to 690 (KSPSDPTHASAPAPPLLIPAASTRSSSTSLASSTPSLENKP) form a disordered region. Residues 667-686 (IPAASTRSSSTSLASSTPSL) are compositionally biased toward low complexity. Glycyl lysine isopeptide (Lys-Gly) (interchain with G-Cter in SUMO2) cross-links involve residues Lys689 and Lys730. An HD1 motif is present at residues 689-718 (KPPQAIVKPQILTHVIEGFVIQEGLEPFPV). A phosphoserine mark is found at Ser759 and Ser760. Residues 774-808 (EEMDSELLKCEFCGKMGYPNEFLRSKRFCTMSCAK) form an FCS-type zinc finger. Residues Cys783, Cys786, Cys802, and Cys806 each coordinate Zn(2+). Lys808 is covalently cross-linked (Glycyl lysine isopeptide (Lys-Gly) (interchain with G-Cter in SUMO2)). Disordered stretches follow at residues 825–844 (RKPDNQSLGHRGRRPSGPEG) and 863–888 (EDVASHEDPVPSAMTTRLRRQSERER). The SAM domain maps to 917-981 (WTVDDVWAFI…CARINSLKDS (65 aa)).

Component of a PRC1-like complex. Ubiquitous expression.

The protein localises to the nucleus. Functionally, component of a Polycomb group (PcG) multiprotein PRC1-like complex, a complex class required to maintain the transcriptionally repressive state of many genes, including Hox genes, throughout development. PcG PRC1 complex acts via chromatin remodeling and modification of histones; it mediates monoubiquitination of histone H2A 'Lys-119', rendering chromatin heritably changed in its expressibility. This is Polyhomeotic-like protein 3 (Phc3) from Mus musculus (Mouse).